The chain runs to 253 residues: Sulfate transporter CysZ (253 aa).

A run of 4 helical transmembrane segments spans residues 31–51 (FVILPLLVNILLMGGAFWWLF), 75–95 (LLWPLAVISVLLVFGYFFSTI), 151–171 (IVLLILYFIPGIGQTVAPVLW), and 222–242 (IPLLNLFIMPVAVCGATAMWV).

This sequence belongs to the CysZ family.

The protein resides in the cell inner membrane. In terms of biological role, high affinity, high specificity proton-dependent sulfate transporter, which mediates sulfate uptake. Provides the sulfur source for the cysteine synthesis pathway. In Shigella dysenteriae serotype 1 (strain Sd197), this protein is Sulfate transporter CysZ.